A 557-amino-acid polypeptide reads, in one-letter code: Formate--tetrahydrofolate ligase (557 aa).

Residue 44–51 (TPLGEGKS) participates in ATP binding.

It belongs to the formate--tetrahydrofolate ligase family.

It catalyses the reaction (6S)-5,6,7,8-tetrahydrofolate + formate + ATP = (6R)-10-formyltetrahydrofolate + ADP + phosphate. Its pathway is one-carbon metabolism; tetrahydrofolate interconversion. In Desulfotalea psychrophila (strain LSv54 / DSM 12343), this protein is Formate--tetrahydrofolate ligase.